A 73-amino-acid polypeptide reads, in one-letter code: MKFLLSVIAGLLILALYLFWKVQPPVWIQVETNSSQLKQSVRMAGTTLQVKHMIKSDAGEETAVISNGISGLK.

An N-terminal signal peptide occupies residues 1–28 (MKFLLSVIAGLLILALYLFWKVQPPVWI).

This is an uncharacterized protein from Bacillus subtilis (strain 168).